The following is a 54-amino-acid chain: UPF0391 membrane protein TERTU_3637 (54 aa).

Helical transmembrane passes span 4–24 (WALV…TGLA) and 29–49 (SIAW…LVAG).

Belongs to the UPF0391 family.

The protein resides in the cell membrane. In Teredinibacter turnerae (strain ATCC 39867 / T7901), this protein is UPF0391 membrane protein TERTU_3637.